The chain runs to 81 residues: Cytotoxin 4N (81 aa).

Positions 1-21 (MKTLLLTLVVVTIVCLDLGYT) are cleaved as a signal peptide. 4 disulfide bridges follow: cysteine 24–cysteine 42, cysteine 35–cysteine 59, cysteine 63–cysteine 74, and cysteine 75–cysteine 80.

Belongs to the three-finger toxin family. Short-chain subfamily. Type IA cytotoxin sub-subfamily. Monomer in solution; Homodimer and oligomer in the presence of negatively charged lipids forming a pore with a size ranging between 20 and 30 Angstroms. Expressed by the venom gland.

The protein resides in the secreted. It is found in the target cell membrane. Functionally, shows cytolytic activity on many different cells by forming pore in lipid membranes. In vivo, increases heart rate or kills the animal by cardiac arrest. In addition, it binds to heparin with high affinity, interacts with Kv channel-interacting protein 1 (KCNIP1) in a calcium-independent manner, and binds to integrin alpha-V/beta-3 (ITGAV/ITGB3) with moderate affinity. The protein is Cytotoxin 4N of Naja atra (Chinese cobra).